A 244-amino-acid chain; its full sequence is Small ribosomal subunit protein uS2 (244 aa).

The protein belongs to the universal ribosomal protein uS2 family.

The protein is Small ribosomal subunit protein uS2 of Desulforudis audaxviator (strain MP104C).